A 488-amino-acid polypeptide reads, in one-letter code: UDP-N-acetylmuramoyl-L-alanyl-D-glutamate--2,6-diaminopimelate ligase (488 aa).

UDP-N-acetyl-alpha-D-muramoyl-L-alanyl-D-glutamate-binding positions include Leu24, Ser26, and 41-43 (HQV). 113–119 (GTNGKTT) is an ATP binding site. UDP-N-acetyl-alpha-D-muramoyl-L-alanyl-D-glutamate-binding positions include Asn154, 155–156 (TT), Ser182, Gln188, and Arg190. Residue Lys222 is modified to N6-carboxylysine. Meso-2,6-diaminopimelate-binding positions include Arg386, 410–413 (DNPR), Gly461, and Glu465. The Meso-diaminopimelate recognition motif signature appears at 410-413 (DNPR).

Belongs to the MurCDEF family. MurE subfamily. Requires Mg(2+) as cofactor. Carboxylation is probably crucial for Mg(2+) binding and, consequently, for the gamma-phosphate positioning of ATP.

It localises to the cytoplasm. It catalyses the reaction UDP-N-acetyl-alpha-D-muramoyl-L-alanyl-D-glutamate + meso-2,6-diaminopimelate + ATP = UDP-N-acetyl-alpha-D-muramoyl-L-alanyl-gamma-D-glutamyl-meso-2,6-diaminopimelate + ADP + phosphate + H(+). The protein operates within cell wall biogenesis; peptidoglycan biosynthesis. Catalyzes the addition of meso-diaminopimelic acid to the nucleotide precursor UDP-N-acetylmuramoyl-L-alanyl-D-glutamate (UMAG) in the biosynthesis of bacterial cell-wall peptidoglycan. This is UDP-N-acetylmuramoyl-L-alanyl-D-glutamate--2,6-diaminopimelate ligase from Haemophilus influenzae (strain 86-028NP).